The following is an 801-amino-acid chain: Phenylalanine--tRNA ligase beta subunit (801 aa).

Positions 39-153 constitute a tRNA-binding domain; sequence ADGLSKLVVG…EEAVPGDAIF (115 aa). A B5 domain is found at 406 to 481; sequence TEPVEVSTSL…RIYGYDKLPT (76 aa). Positions 459, 465, 468, and 469 each coordinate Mg(2+). The 94-residue stretch at 708 to 801 folds into the FDX-ACB domain; it reads TKFPAMTRDV…LTEQVGAEVR (94 aa).

This sequence belongs to the phenylalanyl-tRNA synthetase beta subunit family. Type 1 subfamily. Tetramer of two alpha and two beta subunits. Mg(2+) serves as cofactor.

The protein localises to the cytoplasm. The enzyme catalyses tRNA(Phe) + L-phenylalanine + ATP = L-phenylalanyl-tRNA(Phe) + AMP + diphosphate + H(+). This Streptococcus pyogenes serotype M1 protein is Phenylalanine--tRNA ligase beta subunit.